The following is a 208-amino-acid chain: Large ribosomal subunit protein uL4 (208 aa).

The interval 44–76 is disordered; that stretch reads RRQGTQSTKTKSEVRGGGRKPWRQKGTGRARHG. Over residues 60–76 the composition is skewed to basic residues; sequence GGRKPWRQKGTGRARHG.

The protein belongs to the universal ribosomal protein uL4 family. As to quaternary structure, part of the 50S ribosomal subunit.

In terms of biological role, one of the primary rRNA binding proteins, this protein initially binds near the 5'-end of the 23S rRNA. It is important during the early stages of 50S assembly. It makes multiple contacts with different domains of the 23S rRNA in the assembled 50S subunit and ribosome. Its function is as follows. Forms part of the polypeptide exit tunnel. The sequence is that of Large ribosomal subunit protein uL4 from Acetivibrio thermocellus (strain ATCC 27405 / DSM 1237 / JCM 9322 / NBRC 103400 / NCIMB 10682 / NRRL B-4536 / VPI 7372) (Clostridium thermocellum).